A 339-amino-acid polypeptide reads, in one-letter code: DNA-directed RNA polymerase subunit alpha (339 aa).

The segment at Met-1–Asp-238 is alpha N-terminal domain (alpha-NTD). Positions Leu-255 to Val-339 are alpha C-terminal domain (alpha-CTD).

It belongs to the RNA polymerase alpha chain family. In terms of assembly, homodimer. The RNAP catalytic core consists of 2 alpha, 1 beta, 1 beta' and 1 omega subunit. When a sigma factor is associated with the core the holoenzyme is formed, which can initiate transcription.

It catalyses the reaction RNA(n) + a ribonucleoside 5'-triphosphate = RNA(n+1) + diphosphate. DNA-dependent RNA polymerase catalyzes the transcription of DNA into RNA using the four ribonucleoside triphosphates as substrates. The sequence is that of DNA-directed RNA polymerase subunit alpha from Anaeromyxobacter sp. (strain Fw109-5).